The sequence spans 555 residues: Dihydroxy-acid dehydratase (555 aa).

Cys46 contacts [2Fe-2S] cluster. Asp78 lines the Mg(2+) pocket. Cys119 serves as a coordination point for [2Fe-2S] cluster. Residues Asp120 and Lys121 each contribute to the Mg(2+) site. An N6-carboxylysine modification is found at Lys121. A [2Fe-2S] cluster-binding site is contributed by Cys191. Glu442 lines the Mg(2+) pocket. Residue Ser468 is the Proton acceptor of the active site.

It belongs to the IlvD/Edd family. As to quaternary structure, homodimer. Requires [2Fe-2S] cluster as cofactor. Mg(2+) serves as cofactor.

It catalyses the reaction (2R)-2,3-dihydroxy-3-methylbutanoate = 3-methyl-2-oxobutanoate + H2O. It carries out the reaction (2R,3R)-2,3-dihydroxy-3-methylpentanoate = (S)-3-methyl-2-oxopentanoate + H2O. The protein operates within amino-acid biosynthesis; L-isoleucine biosynthesis; L-isoleucine from 2-oxobutanoate: step 3/4. It participates in amino-acid biosynthesis; L-valine biosynthesis; L-valine from pyruvate: step 3/4. Functions in the biosynthesis of branched-chain amino acids. Catalyzes the dehydration of (2R,3R)-2,3-dihydroxy-3-methylpentanoate (2,3-dihydroxy-3-methylvalerate) into 2-oxo-3-methylpentanoate (2-oxo-3-methylvalerate) and of (2R)-2,3-dihydroxy-3-methylbutanoate (2,3-dihydroxyisovalerate) into 2-oxo-3-methylbutanoate (2-oxoisovalerate), the penultimate precursor to L-isoleucine and L-valine, respectively. The sequence is that of Dihydroxy-acid dehydratase from Thermus thermophilus (strain ATCC 27634 / DSM 579 / HB8).